The following is a 131-amino-acid chain: MVIDTSALVAMLSDEPDAERFEAAVEADHIRLMSTASYLETALVIEARFGEPGGRELDLWLHRAAVDLVAVHADQADAARAAYRTYGKGRHRAGLNYGDCFSYGLAKISGQPLLFKGEDFQHTDIATVALP.

One can recognise a PINc domain in the interval 1–129 (MVIDTSALVA…FQHTDIATVA (129 aa)). Residues D4 and D99 each contribute to the Mg(2+) site.

Belongs to the PINc/VapC protein family. It depends on Mg(2+) as a cofactor.

In terms of biological role, toxic component of a type II toxin-antitoxin (TA) system. An RNase. Its toxic effect is neutralized by coexpression with cognate antitoxin VapB30. The protein is Ribonuclease VapC30 of Mycobacterium tuberculosis (strain CDC 1551 / Oshkosh).